Consider the following 1316-residue polypeptide: DNA-directed RNA polymerase subunit beta' (1316 aa).

Cys60, Cys62, Cys75, and Cys78 together coordinate Zn(2+). Asp535, Asp537, and Asp539 together coordinate Mg(2+). Residues Cys891, Cys968, Cys975, and Cys978 each coordinate Zn(2+).

It belongs to the RNA polymerase beta' chain family. As to quaternary structure, the RNAP catalytic core consists of 2 alpha, 1 beta, 1 beta' and 1 omega subunit. When a sigma factor is associated with the core the holoenzyme is formed, which can initiate transcription. It depends on Mg(2+) as a cofactor. Zn(2+) serves as cofactor.

The catalysed reaction is RNA(n) + a ribonucleoside 5'-triphosphate = RNA(n+1) + diphosphate. Its function is as follows. DNA-dependent RNA polymerase catalyzes the transcription of DNA into RNA using the four ribonucleoside triphosphates as substrates. The sequence is that of DNA-directed RNA polymerase subunit beta' from Mycobacterium leprae (strain Br4923).